Here is a 229-residue protein sequence, read N- to C-terminus: Demethylmenaquinone methyltransferase (229 aa).

S-adenosyl-L-methionine is bound by residues threonine 62, aspartate 80, 100–101, and serine 117; that span reads DG.

It belongs to the class I-like SAM-binding methyltransferase superfamily. MenG/UbiE family.

It catalyses the reaction a 2-demethylmenaquinol + S-adenosyl-L-methionine = a menaquinol + S-adenosyl-L-homocysteine + H(+). It functions in the pathway quinol/quinone metabolism; menaquinone biosynthesis; menaquinol from 1,4-dihydroxy-2-naphthoate: step 2/2. Functionally, methyltransferase required for the conversion of demethylmenaquinol (DMKH2) to menaquinol (MKH2). The chain is Demethylmenaquinone methyltransferase from Corynebacterium kroppenstedtii (strain DSM 44385 / JCM 11950 / CIP 105744 / CCUG 35717).